The primary structure comprises 263 residues: Regulatory protein RecX (263 aa).

Belongs to the RecX family.

Its subcellular location is the cytoplasm. Modulates RecA activity. This is Regulatory protein RecX from Bacillus velezensis (strain DSM 23117 / BGSC 10A6 / LMG 26770 / FZB42) (Bacillus amyloliquefaciens subsp. plantarum).